The sequence spans 501 residues: Bifunctional pantoate ligase/cytidylate kinase (501 aa).

Residues 1-264 (MLSTQAELAA…CGTTRLIDHS (264 aa)) are pantoate--beta-alanine ligase. Position 25 to 32 (25 to 32 (MGGLHQGH)) interacts with ATP. His-32 serves as the catalytic Proton donor. Residue Gln-55 coordinates (R)-pantoate. Residue Gln-55 coordinates beta-alanine. 144–147 (GEKD) is an ATP binding site. Gln-150 serves as a coordination point for (R)-pantoate. Residues Val-173 and 181–184 (LSSR) each bind ATP. Positions 265–501 (FLMTRQPLVA…PEEAWPTPAG (237 aa)) are cytidylate kinase.

This sequence in the N-terminal section; belongs to the pantothenate synthetase family. In the C-terminal section; belongs to the cytidylate kinase family. Type 1 subfamily.

Its subcellular location is the cytoplasm. The catalysed reaction is (R)-pantoate + beta-alanine + ATP = (R)-pantothenate + AMP + diphosphate + H(+). The enzyme catalyses CMP + ATP = CDP + ADP. It catalyses the reaction dCMP + ATP = dCDP + ADP. Its pathway is cofactor biosynthesis; (R)-pantothenate biosynthesis; (R)-pantothenate from (R)-pantoate and beta-alanine: step 1/1. In terms of biological role, catalyzes the condensation of pantoate with beta-alanine in an ATP-dependent reaction via a pantoyl-adenylate intermediate. Functionally, catalyzes the transfer of a phosphate group from ATP to either CMP or dCMP to form CDP or dCDP and ADP, respectively. The sequence is that of Bifunctional pantoate ligase/cytidylate kinase from Parasynechococcus marenigrum (strain WH8102).